A 337-amino-acid polypeptide reads, in one-letter code: MIEIDGSFGEGGGQILRTSLTLSVITGKPFRIFNIRANRPNPGLQRQHLWAVKAMKMISNAETKGDEVGSKELIFVPHEIKGNINIDIDVGTAGSVTLIIQTVLPAIINKNVRIRIKGGTDVPKSPTIDYIRLVYLEILRKIGIEAKLNLIKRGHYPEGGGEVIIENVNGNPSAFSLLELGKLTIIKGISHVSSLPAHIAERQMNSARELLSKLGVPIEIQTDVRQGEVSKGSGIALAAIGEKSIIGADSLGERGKRAEIVGEEAARILIDNLNTKASVDIHMSDMLMIFASLYGGEYIGAELTSHAYTNMEIIKKFLDIKIDVSGKRPFRFKAKIF.

ATP is bound by residues Q101 and 282-285; that span reads HMSD. Catalysis depends on H306, which acts as the Tele-AMP-histidine intermediate.

It belongs to the RNA 3'-terminal cyclase family. Type 1 subfamily.

It localises to the cytoplasm. It catalyses the reaction a 3'-end 3'-phospho-ribonucleotide-RNA + ATP = a 3'-end 2',3'-cyclophospho-ribonucleotide-RNA + AMP + diphosphate. Its function is as follows. Catalyzes the conversion of 3'-phosphate to a 2',3'-cyclic phosphodiester at the end of RNA. The mechanism of action of the enzyme occurs in 3 steps: (A) adenylation of the enzyme by ATP; (B) transfer of adenylate to an RNA-N3'P to produce RNA-N3'PP5'A; (C) and attack of the adjacent 2'-hydroxyl on the 3'-phosphorus in the diester linkage to produce the cyclic end product. The biological role of this enzyme is unknown but it is likely to function in some aspects of cellular RNA processing. The sequence is that of RNA 3'-terminal phosphate cyclase from Saccharolobus islandicus (strain M.16.27) (Sulfolobus islandicus).